A 228-amino-acid chain; its full sequence is PKHD-type hydroxylase Rmet_3078 (228 aa).

Residues Ile80 to Ser180 form the Fe2OG dioxygenase domain. Fe cation-binding residues include His98, Asp100, and His161. Arg171 contributes to the 2-oxoglutarate binding site.

Requires Fe(2+) as cofactor. L-ascorbate serves as cofactor.

This Cupriavidus metallidurans (strain ATCC 43123 / DSM 2839 / NBRC 102507 / CH34) (Ralstonia metallidurans) protein is PKHD-type hydroxylase Rmet_3078.